Reading from the N-terminus, the 456-residue chain is Signal transduction histidine-protein kinase ArlS (456 aa).

2 helical membrane-spanning segments follow: residues 13–33 (LITTLITFTTILLFCLIIIFF) and 157–177 (IVALAFGLIATIITAGVSYIF). In terms of domain architecture, HAMP spans 179–232 (SQITKPIVTMSNKMNQIRRDGFQNKLELTTNYEETDNLIDTFNEMMYQIEESFN). Residues 240–456 (DASHELRTPL…TFKISFPVLN (217 aa)) enclose the Histidine kinase domain. H243 is modified (phosphohistidine; by autocatalysis).

Autophosphorylated.

Its subcellular location is the cell membrane. It carries out the reaction ATP + protein L-histidine = ADP + protein N-phospho-L-histidine.. Its function is as follows. Member of the two-component regulatory system ArlS/ArlR. ArlS probably functions as a sensor protein kinase which is autophosphorylated at a histidine residue and transfers its phosphate group to ArlR. This chain is Signal transduction histidine-protein kinase ArlS (arlS), found in Staphylococcus epidermidis (strain ATCC 35984 / DSM 28319 / BCRC 17069 / CCUG 31568 / BM 3577 / RP62A).